A 253-amino-acid polypeptide reads, in one-letter code: ATP synthase subunit a (253 aa).

Helical transmembrane passes span 30–50 (FTNA…VLLA), 88–108 (FFPF…IGLV), 118–138 (IAVT…YGLI), 144–164 (FLGI…MIMI), 184–204 (MLAG…LLGA), and 211–231 (VAPL…LVAF).

This sequence belongs to the ATPase A chain family. In terms of assembly, F-type ATPases have 2 components, CF(1) - the catalytic core - and CF(0) - the membrane proton channel. CF(1) has five subunits: alpha(3), beta(3), gamma(1), delta(1), epsilon(1). CF(0) has three main subunits: a(1), b(2) and c(9-12). The alpha and beta chains form an alternating ring which encloses part of the gamma chain. CF(1) is attached to CF(0) by a central stalk formed by the gamma and epsilon chains, while a peripheral stalk is formed by the delta and b chains.

Its subcellular location is the cell inner membrane. In terms of biological role, key component of the proton channel; it plays a direct role in the translocation of protons across the membrane. This is ATP synthase subunit a from Beijerinckia indica subsp. indica (strain ATCC 9039 / DSM 1715 / NCIMB 8712).